A 185-amino-acid polypeptide reads, in one-letter code: Transcription termination/antitermination protein NusG (185 aa).

The KOW domain occupies 134-163; that stretch reads VGQQVRIVEGPFATFSGEVEEVMSERNKVR.

This sequence belongs to the NusG family.

Its function is as follows. Participates in transcription elongation, termination and antitermination. The sequence is that of Transcription termination/antitermination protein NusG from Treponema pallidum (strain Nichols).